A 219-amino-acid chain; its full sequence is Deoxyribose-phosphate aldolase (219 aa).

Asp-93 serves as the catalytic Proton donor/acceptor. Residue Lys-154 is the Schiff-base intermediate with acetaldehyde of the active site. Lys-179 functions as the Proton donor/acceptor in the catalytic mechanism.

It belongs to the DeoC/FbaB aldolase family. DeoC type 1 subfamily.

It localises to the cytoplasm. It carries out the reaction 2-deoxy-D-ribose 5-phosphate = D-glyceraldehyde 3-phosphate + acetaldehyde. Its pathway is carbohydrate degradation; 2-deoxy-D-ribose 1-phosphate degradation; D-glyceraldehyde 3-phosphate and acetaldehyde from 2-deoxy-alpha-D-ribose 1-phosphate: step 2/2. Catalyzes a reversible aldol reaction between acetaldehyde and D-glyceraldehyde 3-phosphate to generate 2-deoxy-D-ribose 5-phosphate. The chain is Deoxyribose-phosphate aldolase from Haloquadratum walsbyi (strain DSM 16790 / HBSQ001).